We begin with the raw amino-acid sequence, 277 residues long: 3-methyl-2-oxobutanoate hydroxymethyltransferase (277 aa).

Mg(2+)-binding residues include Asp-53 and Asp-96. 3-methyl-2-oxobutanoate contacts are provided by residues 53–54, Asp-96, and Lys-126; that span reads DS. Glu-128 contributes to the Mg(2+) binding site. Glu-195 serves as the catalytic Proton acceptor.

This sequence belongs to the PanB family. In terms of assembly, homodecamer; pentamer of dimers. The cofactor is Mg(2+).

The protein resides in the cytoplasm. It catalyses the reaction 3-methyl-2-oxobutanoate + (6R)-5,10-methylene-5,6,7,8-tetrahydrofolate + H2O = 2-dehydropantoate + (6S)-5,6,7,8-tetrahydrofolate. The protein operates within cofactor biosynthesis; (R)-pantothenate biosynthesis; (R)-pantoate from 3-methyl-2-oxobutanoate: step 1/2. Its function is as follows. Catalyzes the reversible reaction in which hydroxymethyl group from 5,10-methylenetetrahydrofolate is transferred onto alpha-ketoisovalerate to form ketopantoate. This chain is 3-methyl-2-oxobutanoate hydroxymethyltransferase, found in Chlorobaculum tepidum (strain ATCC 49652 / DSM 12025 / NBRC 103806 / TLS) (Chlorobium tepidum).